Reading from the N-terminus, the 297-residue chain is Polyketide transferase ATR5 (297 aa).

Residues 49 to 272 (DVAVWFQKRG…FVLAENKGHM (224 aa)) are abhydrolase domain.

This sequence belongs to the polyketide transferase af380 family.

Its pathway is mycotoxin biosynthesis. Its function is as follows. Polyketide transferase; part of the core atranone cluster (CAC) which products are predicted to catalyze most or all steps of atranone synthesis, starting from geranylgeranyl pyrophosphate (GGPP). The initial cyclization of GGPP to dolabellane is probably performed by the terpene cyclase ATR13. The Baeyer-Villiger oxidation near the end of the atranone synthesis, which converts atranones D and E to atranones F and G is predicted to be catalyzed by the monooxygenase ATR8. Of the CAC's other predicted gene products, the reducing PKS ATR6 might synthesize a polyketide chain. This polyketide is probably transferred onto the atranone backbone by the polyketide transferase ATR5. Other predicted CAC products include 4 oxygenases (ATR2, ATR3, ATR4, and ATR14), 3 short-chain reductases (ATR7, ATR9, and ATR10), and a methyltransferase (ATR12). These may all be involved in the various steps of atranone biosynthesis, although their specific roles must await experimental determination. The sequence is that of Polyketide transferase ATR5 from Stachybotrys chlorohalonatus (strain IBT 40285).